We begin with the raw amino-acid sequence, 788 residues long: Integrin beta-6 (788 aa).

A signal peptide spans 1-21 (MGIELLCFFFLFLGRDDHVRG). The PSI domain occupies 22–71 (GCAMEGAETCGDCLLIGPQCAWCSQENFTHPSGVSERCDTPANLLAKGCQ). The Extracellular segment spans residues 22 to 709 (GCAMEGAETC…KDCPKPPNIP (688 aa)). Disulfide bonds link cysteine 23–cysteine 41, cysteine 31–cysteine 454, cysteine 34–cysteine 59, cysteine 44–cysteine 70, cysteine 197–cysteine 204, cysteine 252–cysteine 293, cysteine 394–cysteine 406, cysteine 426–cysteine 452, cysteine 456–cysteine 476, cysteine 467–cysteine 479, cysteine 481–cysteine 490, cysteine 492–cysteine 519, cysteine 502–cysteine 517, cysteine 511–cysteine 522, cysteine 524–cysteine 537, cysteine 539–cysteine 560, cysteine 544–cysteine 558, cysteine 552–cysteine 563, and cysteine 565–cysteine 574. Asparagine 48 and asparagine 97 each carry an N-linked (GlcNAc...) asparagine glycan. Positions 131-371 (YPVDLYYLMD…QLIISAYEEL (241 aa)) constitute a VWFA domain. 3 residues coordinate Mg(2+): aspartate 140, serine 142, and serine 144. Serine 144, aspartate 147, aspartate 148, and glutamate 179 together coordinate Ca(2+). Ca(2+)-binding residues include asparagine 235, aspartate 237, proline 239, and glutamate 240. Mg(2+) is bound at residue glutamate 240. The N-linked (GlcNAc...) asparagine glycan is linked to asparagine 260. 2 residues coordinate Ca(2+): aspartate 271 and lysine 355. Asparagine 387, asparagine 396, and asparagine 418 each carry an N-linked (GlcNAc...) asparagine glycan. 4 consecutive I-EGF domains span residues 456–491 (CQKE…PHCE), 492–538 (CGED…PYCQ), 539–575 (CDNF…EYCN), and 576–615 (CTTS…PTCE). Residues asparagine 463 and asparagine 471 are each glycosylated (N-linked (GlcNAc...) asparagine). An N-linked (GlcNAc...) asparagine glycan is attached at asparagine 541. Asparagine 575 carries N-linked (GlcNAc...) asparagine glycosylation. 9 disulfides stabilise this stretch: cysteine 576–cysteine 599, cysteine 583–cysteine 597, cysteine 591–cysteine 602, cysteine 604–cysteine 614, cysteine 617–cysteine 620, cysteine 624–cysteine 670, cysteine 630–cysteine 649, cysteine 633–cysteine 645, and cysteine 678–cysteine 702. An N-linked (GlcNAc...) asparagine glycan is attached at asparagine 696. A helical transmembrane segment spans residues 710 to 730 (MIMLGVSLAILLIGVVLLCIW). The interval 731 to 758 (KLLVSFHDRKEVAKFEAERSKAKWQTGT) is interaction with HAX1. Over 731-788 (KLLVSFHDRKEVAKFEAERSKAKWQTGTNPLYRGSTSTFKNVTYKHRDKLKTDLSTDG) the chain is Cytoplasmic.

This sequence belongs to the integrin beta chain family. Heterodimer of an alpha and a beta subunit. Interacts with FLNB. Interacts with HAX1. ITGAV:ITGB6 interacts with FBN1. ITGAV:ITGB6 interacts with TGFB1.

The protein resides in the cell membrane. It is found in the cell junction. The protein localises to the focal adhesion. In terms of biological role, integrin alpha-V:beta-6 (ITGAV:ITGB6) is a receptor for fibronectin and cytotactin. It recognizes the sequence R-G-D in its ligands. ITGAV:ITGB6 acts as a receptor for fibrillin-1 (FBN1) and mediates R-G-D-dependent cell adhesion to FBN1. Integrin alpha-V:beta-6 (ITGAV:ITGB6) mediates R-G-D-dependent release of transforming growth factor beta-1 (TGF-beta-1) from regulatory Latency-associated peptide (LAP), thereby playing a key role in TGF-beta-1 activation. The chain is Integrin beta-6 (ITGB6) from Cavia porcellus (Guinea pig).